We begin with the raw amino-acid sequence, 92 residues long: uncharacterized protein (92 aa).

An HTH arsR-type domain is found at 1 to 92; that stretch reads MNGNKDAIFK…LKNLLKGWIE (92 aa). A DNA-binding region (H-T-H motif) is located at residues 37–61; that stretch reads IRLITKYDLSITRQAIAKHLSVLED.

This is an uncharacterized protein from Bacillus subtilis (strain 168).